We begin with the raw amino-acid sequence, 208 residues long: MSSGDFGNPLRKFKLVFLGEQSVGKTSLITRFMYDSFDNTYQATIGIDFLSKTMYLEDRTVRLQLWDTAGQERFRSLIPSYIRDSTVAVVVYDITNTNSFHQTSKWIDDVRTERGSDVIIMLVGNKTDLSDKRQVSTEEGERKAKELNVMFIETSAKAGYNVKQLFRRVAAALPGMDSTENKPSEDMQEVVLKDSPNETKDPEGGCAC.

19–27 (GEQSVGKTS) is a GTP binding site. An Effector region motif is present at residues 41-49 (YQATIGIDF). Residues 67 to 71 (DTAGQ), 125 to 128 (NKTD), and 155 to 157 (SAK) each bind GTP. The segment at 176 to 208 (MDSTENKPSEDMQEVVLKDSPNETKDPEGGCAC) is disordered. The span at 179–208 (TENKPSEDMQEVVLKDSPNETKDPEGGCAC) shows a compositional bias: basic and acidic residues.

It belongs to the small GTPase superfamily. Rab family. In terms of assembly, interacts with Rich and Act5C. Interacts with BicD (via C-terminal domain). Interacts (in GTP-bound) with GCC1/CG10703 and cbs. Interacts with Gorab (via C-terminus); binds to a Gorab homodimer, this interaction seems to be required for trans-Golgi localization of Gorab. As to expression, expressed in larval eye, wing and leg imaginal disks and in salivary gland. Expressed in the larval optic lobe, showing an enrichment in the neuropil. In the adult brain, expressed in photoreceptors and mushroom body.

The protein resides in the golgi apparatus membrane. The protein localises to the synapse. Its subcellular location is the perikaryon. In terms of biological role, protein transport. Regulator of membrane traffic from the Golgi apparatus towards the endoplasmic reticulum (ER). Mediates membrane trafficking during egg chamber growth and organization, possibly upstream of exocyst component Sec5. Also during oogenesis, plays a role, together with BicD but independently of Sec5, in the polarization of the oocyte microtubule cytoskeleton, in the localization of oskar mRNA and in the anterodorsal secretion of grk. Required for anterograde opsin transport through the ER-Golgi complex. Plays a role, together with Rich, in regulating CadN transport in photoreceptor cells which is required for the formation of normal synaptic connections between axons from the inner photoreceptor cells in the eye and postsynaptic cells in the brain medulla layer M6. Necessary for proper development of bristle shafts of macrochaete and microchaete on the head, thorax and scutellum. Modulates Notch signaling. As a key regulator of vesicular traffic, plays a critical role in the regulation of actin organization and is required for normal rates of phagocytic uptake during phagocytosis involved in defense against viral and fungal infection. In Drosophila melanogaster (Fruit fly), this protein is Ras-related protein Rab6.